The chain runs to 193 residues: dCTP deaminase, dUMP-forming (193 aa).

DCTP-binding positions include 101 to 106, aspartate 119, 127 to 129, glutamine 148, tyrosine 162, and glutamine 174; these read KSSLGR and TLE. Glutamate 129 (proton donor/acceptor) is an active-site residue. The tract at residues 161-184 is disordered; it reads PYGSETTGSHYQGQRGPTPSRSYQ.

Belongs to the dCTP deaminase family. Homotrimer.

It carries out the reaction dCTP + 2 H2O = dUMP + NH4(+) + diphosphate. Its pathway is pyrimidine metabolism; dUMP biosynthesis; dUMP from dCTP: step 1/1. Its function is as follows. Bifunctional enzyme that catalyzes both the deamination of dCTP to dUTP and the hydrolysis of dUTP to dUMP without releasing the toxic dUTP intermediate. In Bifidobacterium animalis subsp. lactis (strain AD011), this protein is dCTP deaminase, dUMP-forming.